Reading from the N-terminus, the 1101-residue chain is Type II inositol polyphosphate 5-phosphatase 15 (1101 aa).

Over residues 31-40 (RSAYSSSSSS) the composition is skewed to low complexity. A disordered region spans residues 31–54 (RSAYSSSSSSGDDESQPSVDDSNK). WD repeat units follow at residues 121–162 (LRET…GSGR), 180–219 (FGSA…GIEE), 225–263 (AHRG…GKSL), 403–432 (DDSR…MRWD), 433–481 (GNGN…GGWV), and 483–519 (HSGP…PLDN). Catalytic stretches follow at residues 749 to 765 (DMVI…DDIT) and 828 to 843 (KKRI…YRDN). Lysine 907 participates in a covalent cross-link: Glycyl lysine isopeptide (Lys-Gly) (interchain with G-Cter in ubiquitin).

This sequence belongs to the inositol polyphosphate 5-phosphatase family. Mg(2+) is required as a cofactor. In terms of tissue distribution, predominantly expressed in interfascicular fibers and vascular bundles. Expressed in seedlings, stems, roots and flowers. Expressed at lower level in mature leaves.

The enzyme catalyses a 1,2-diacyl-sn-glycero-3-phospho-(1D-myo-inositol-4,5-bisphosphate) + H2O = a 1,2-diacyl-sn-glycero-3-phospho-(1D-myo-inositol 4-phosphate) + phosphate. The catalysed reaction is a 1,2-diacyl-sn-glycero-3-phospho-(1D-myo-inositol-3,4,5-trisphosphate) + H2O = a 1,2-diacyl-sn-glycero-3-phospho-(1D-myo-inositol-3,4-bisphosphate) + phosphate. It catalyses the reaction 1D-myo-inositol 1,4,5-trisphosphate + H2O = 1D-myo-inositol 1,4-bisphosphate + phosphate. Its function is as follows. Has phosphatase activity toward PtdIns(4,5)P2, PtdIns(3,4,5)P3 and Ins(1,4,5)P3. Has a higher substrate affinity toward PtdIns(4,5)P2. Required for secondary wall synthesis and actin organization in fiber cells. This is Type II inositol polyphosphate 5-phosphatase 15 from Arabidopsis thaliana (Mouse-ear cress).